A 198-amino-acid polypeptide reads, in one-letter code: Probable chemoreceptor glutamine deamidase CheD (198 aa).

It belongs to the CheD family.

The enzyme catalyses L-glutaminyl-[protein] + H2O = L-glutamyl-[protein] + NH4(+). In terms of biological role, probably deamidates glutamine residues to glutamate on methyl-accepting chemotaxis receptors (MCPs), playing an important role in chemotaxis. This chain is Probable chemoreceptor glutamine deamidase CheD, found in Xanthomonas campestris pv. campestris (strain 8004).